A 96-amino-acid polypeptide reads, in one-letter code: MNIRPLHDRVIVKRLEEERKTASGIVIPDTAAEKPDQGEIIAVGKGKAGEDGKIRTLEVKVGDKVLFGKYAGQAVKIKGEEFLVMREEDIMGVIEG.

Belongs to the GroES chaperonin family. Heptamer of 7 subunits arranged in a ring. Interacts with the chaperonin GroEL.

The protein localises to the cytoplasm. Functionally, together with the chaperonin GroEL, plays an essential role in assisting protein folding. The GroEL-GroES system forms a nano-cage that allows encapsulation of the non-native substrate proteins and provides a physical environment optimized to promote and accelerate protein folding. GroES binds to the apical surface of the GroEL ring, thereby capping the opening of the GroEL channel. The chain is Co-chaperonin GroES from Nitrosomonas eutropha (strain DSM 101675 / C91 / Nm57).